The following is a 266-amino-acid chain: Glutathione S-transferase AN1595 (266 aa).

The 81-residue stretch at 43–123 (SFGKLYTYKR…HVTNEDSTTT (81 aa)) folds into the GST N-terminal domain. Lys-93, Glu-107, Cys-108, and Asn-143 together coordinate glutathione. Lys-93 lines the substrate pocket. Residues 128–259 (SSLDFVQIIR…VEEGLPNAPP (132 aa)) enclose the GST C-terminal domain.

Belongs to the GST superfamily.

The protein operates within secondary metabolite biosynthesis; terpenoid biosynthesis. Its function is as follows. Glutathione S-transferase; part of the gene cluster that mediates the biosynthesis of the diterpene ent-pimara-8(14),15-diene (PD). Within the cluster, the HMG-CoA reductase AN1593 functions in the mevalonate pathway, which produces isoprenoid precursors. The geranylgeranyl pyrophosphate (GGPP) synthase AN1592 is needed in the formation of GGPP, the precursor for diterpenes. Lastly, the pimaradiene synthase pbcA performs the 2 cyclization steps that convert GGPP to ent-pimara-8(14),15-diene. The putative roles of the remaining cluster enzymes in ent-pimara-8(14),15-diene biosynthesis is unclear. The cytochrome P450 monooxygenase AN1598, the glutathione S-transferase AN1595, the oxidoreductases AN1596 and AN1597 probably function as decorative enzymes. It is possible that in biological conditions the compound is oxidized to ent-pimara-8(14),15-dien-19-oic acid, which is a bioactive diterpene compound predominant in many plant extracts. This chain is Glutathione S-transferase AN1595, found in Emericella nidulans (strain FGSC A4 / ATCC 38163 / CBS 112.46 / NRRL 194 / M139) (Aspergillus nidulans).